Consider the following 328-residue polypeptide: dTDP-3,4-didehydro-2,6-dideoxy-alpha-D-glucose 3-reductase (328 aa).

R20 serves as a coordination point for substrate. NADP(+)-binding positions include 38–39 (SR), L75, and H80. Catalysis depends on K98, which acts as the Proton donor. Positions 166 and 178 each coordinate NADP(+). The substrate site is built by Y236 and T256.

Belongs to the Gfo/Idh/MocA family.

The enzyme catalyses dTDP-4-dehydro-2,6-dideoxy-alpha-D-glucose + NADP(+) = dTDP-3,4-didehydro-2,6-dideoxy-alpha-D-glucose + NADPH + H(+). It functions in the pathway antibiotic biosynthesis. Its function is as follows. Involved in the biosynthesis of one of the two 2,6-deoxysugars, dTDP-L-oleandrose, attached to the macrolactone ring oleandolide to produce the aglycone antibiotic oleandomycin. Catalyzes the reduction of the C-3 keto moiety of dTDP-3,4-diketo-2,6-dideoxy-alpha-D-glucose to yield dTDP-4-keto-2,6-dideoxy-alpha-D-glucose. NADPH is the better reductant, however NADH can also be used. The protein is dTDP-3,4-didehydro-2,6-dideoxy-alpha-D-glucose 3-reductase of Streptomyces antibioticus.